The chain runs to 288 residues: ATP synthase gamma chain (288 aa).

It belongs to the ATPase gamma chain family. As to quaternary structure, F-type ATPases have 2 components, CF(1) - the catalytic core - and CF(0) - the membrane proton channel. CF(1) has five subunits: alpha(3), beta(3), gamma(1), delta(1), epsilon(1). CF(0) has three main subunits: a, b and c.

The protein resides in the cell inner membrane. In terms of biological role, produces ATP from ADP in the presence of a proton gradient across the membrane. The gamma chain is believed to be important in regulating ATPase activity and the flow of protons through the CF(0) complex. The protein is ATP synthase gamma chain of Vibrio vulnificus (strain CMCP6).